The following is a 432-amino-acid chain: Adenylosuccinate synthetase (432 aa).

GTP contacts are provided by residues 12–18 (GDEGKGK) and 40–42 (GHT). Aspartate 13 functions as the Proton acceptor in the catalytic mechanism. Residues aspartate 13 and glycine 40 each coordinate Mg(2+). IMP is bound by residues 13–16 (DEGK), 38–41 (NAGH), threonine 130, arginine 144, glutamine 225, threonine 240, and arginine 304. The Proton donor role is filled by histidine 41. Residue 300–306 (ATTGRPR) coordinates substrate. GTP is bound by residues arginine 306, 332–334 (KLD), and 414–416 (SVG).

The protein belongs to the adenylosuccinate synthetase family. Homodimer. The cofactor is Mg(2+).

The protein resides in the cytoplasm. It carries out the reaction IMP + L-aspartate + GTP = N(6)-(1,2-dicarboxyethyl)-AMP + GDP + phosphate + 2 H(+). It participates in purine metabolism; AMP biosynthesis via de novo pathway; AMP from IMP: step 1/2. In terms of biological role, plays an important role in the de novo pathway of purine nucleotide biosynthesis. Catalyzes the first committed step in the biosynthesis of AMP from IMP. This chain is Adenylosuccinate synthetase, found in Anaeromyxobacter sp. (strain K).